A 246-amino-acid chain; its full sequence is Probable transcriptional regulatory protein SPO1072 (246 aa).

The disordered stretch occupies residues Met1 to Ser22.

This sequence belongs to the TACO1 family.

The protein resides in the cytoplasm. The polypeptide is Probable transcriptional regulatory protein SPO1072 (Ruegeria pomeroyi (strain ATCC 700808 / DSM 15171 / DSS-3) (Silicibacter pomeroyi)).